A 203-amino-acid chain; its full sequence is Sec-independent protein translocase protein TatB (203 aa).

A helical membrane pass occupies residues 1 to 21 (MFDIGWTELLVIAVVLIVVVG). The tract at residues 179–203 (KPKRTTAVRKPATLKKPAQTKKDEA) is disordered.

This sequence belongs to the TatB family. In terms of assembly, the Tat system comprises two distinct complexes: a TatABC complex, containing multiple copies of TatA, TatB and TatC subunits, and a separate TatA complex, containing only TatA subunits. Substrates initially bind to the TatABC complex, which probably triggers association of the separate TatA complex to form the active translocon.

It localises to the cell inner membrane. Its function is as follows. Part of the twin-arginine translocation (Tat) system that transports large folded proteins containing a characteristic twin-arginine motif in their signal peptide across membranes. Together with TatC, TatB is part of a receptor directly interacting with Tat signal peptides. TatB may form an oligomeric binding site that transiently accommodates folded Tat precursor proteins before their translocation. This Rhizobium johnstonii (strain DSM 114642 / LMG 32736 / 3841) (Rhizobium leguminosarum bv. viciae) protein is Sec-independent protein translocase protein TatB.